Here is a 233-residue protein sequence, read N- to C-terminus: Rano class II histocompatibility antigen, A beta chain (233 aa).

The tract at residues 1 to 80 (DFVYQFKGLC…DTVCRYNYEE (80 aa)) is beta-1. Residues 1 to 194 (DFVYQFKGLC…RAQSESAQSK (194 aa)) lie on the Extracellular side of the membrane. An N-linked (GlcNAc...) asparagine glycan is attached at Asn-14. The interval 81–184 (TEVPTSLRRL…SLESPVTVEW (104 aa)) is beta-2. Positions 93-181 (PNVAISLSRT…DHASLESPVT (89 aa)) constitute an Ig-like C1-type domain. The segment at 185–194 (RAQSESAQSK) is connecting peptide. The chain crosses the membrane as a helical span at residues 195–215 (MLSGIGGLVLGVIFLGLGLFI). At 216 to 233 (RHKRQKGPQGPPPAGLLQ) the chain is on the cytoplasmic side.

The protein belongs to the MHC class II family.

It is found in the membrane. Functionally, involved in the presentation of foreign antigens to the immune system. The protein is Rano class II histocompatibility antigen, A beta chain (RT1-B) of Rattus norvegicus (Rat).